Here is a 216-residue protein sequence, read N- to C-terminus: Soluble inorganic pyrophosphatase 5 (216 aa).

The disordered stretch occupies residues 1-20 (MNGEEVKTSQPQKKLQNPTP). Polar residues predominate over residues 8–20 (TSQPQKKLQNPTP). Residues K66 and R80 each contribute to the substrate site. Y88 serves as the catalytic Proton donor. Y92 lines the substrate pocket. D102, D107, and D139 together coordinate Mg(2+). Y176 provides a ligand contact to substrate.

Belongs to the PPase family. Mg(2+) is required as a cofactor.

The protein localises to the cytoplasm. The enzyme catalyses diphosphate + H2O = 2 phosphate + H(+). In Arabidopsis thaliana (Mouse-ear cress), this protein is Soluble inorganic pyrophosphatase 5.